The sequence spans 116 residues: MRRFNTIMQGKTNGGNGPESGTVVVTRTQPKTRKPSLYRVLLLNDDYTPMEFVVHVLQRFFQKNLDDATRIMLHVHNHGVGECGVFTYEVAETKVSQVMDFARQNQHPLQCVMEKK.

The span at Met-1–Lys-11 shows a compositional bias: polar residues. Positions Met-1–Val-23 are disordered.

It belongs to the ClpS family. Binds to the N-terminal domain of the chaperone ClpA.

Involved in the modulation of the specificity of the ClpAP-mediated ATP-dependent protein degradation. This chain is ATP-dependent Clp protease adapter protein ClpS, found in Brucella melitensis biotype 2 (strain ATCC 23457).